The following is a 303-amino-acid chain: Olfactory receptor 4X2 (303 aa).

The Extracellular portion of the chain corresponds to 1-17; it reads MTEFIFLVLSPNQEVQR. A helical transmembrane segment spans residues 18–41; that stretch reads VCFVIFLFLYTAIVLGNFLIVLTV. The Cytoplasmic segment spans residues 42-49; the sequence is MTSRSLGS. A helical transmembrane segment spans residues 50–71; the sequence is PMYFFLSYLSFMEICYSSATAP. The Extracellular segment spans residues 72-92; it reads KLISDLLAERKVISWWGCMAQ. C89 and C181 are disulfide-bonded. The chain crosses the membrane as a helical span at residues 93 to 112; the sequence is LFFLHFFGGTEIFLLTVMAY. Topologically, residues 113-131 are cytoplasmic; sequence DHYVAICKPLSYTTIMNWQ. A helical transmembrane segment spans residues 132-150; the sequence is VCTVLVGIAWVGGFMHSFA. Residues 151-187 lie on the Extracellular side of the membrane; sequence QILLIFHLLFCGPNVINHYFCDLVPLLKLACSDTFLI. The helical transmembrane segment at 188 to 211 threads the bilayer; sequence GLLIVANGGTLSVISFGVLLASYM. At 212–227 the chain is on the cytoplasmic side; that stretch reads VILLHLRTWSSEGWCK. The chain crosses the membrane as a helical span at residues 228–250; it reads ALSTCGSHFAVVILFFGPCVFNS. The Extracellular portion of the chain corresponds to 251 to 261; it reads LRPSTTLPIDK. Residues 262 to 281 traverse the membrane as a helical segment; the sequence is MVAVFYTVITAILNPVIYSL. Residues 282-303 are Cytoplasmic-facing; the sequence is RNAEMRKAMKRLWIRTLRLNEK.

The protein belongs to the G-protein coupled receptor 1 family.

Its subcellular location is the cell membrane. Its function is as follows. Odorant receptor. The protein is Olfactory receptor 4X2 (OR4X2) of Homo sapiens (Human).